Here is a 300-residue protein sequence, read N- to C-terminus: Pantoate kinase (300 aa).

The protein belongs to the GHMP kinase family. PoK subfamily. In terms of assembly, homodimer.

The enzyme catalyses (R)-pantoate + ATP = (R)-4-phosphopantoate + ADP + H(+). It participates in cofactor biosynthesis; coenzyme A biosynthesis. With respect to regulation, moderately stimulated in the presence of potassium cations. Inhibited by increasing concentrations of pantoate. Activity is not affected by CoA/acetyl-CoA. In terms of biological role, phosphorylates (R)-pantoate to form (R)-4-phosphopantoate in the CoA biosynthesis pathway. Displays broad nucleotide specificity and utilizes ATP, GTP, UTP, and CTP with comparable catalytic efficiencies. The polypeptide is Pantoate kinase (Thermococcus kodakarensis (strain ATCC BAA-918 / JCM 12380 / KOD1) (Pyrococcus kodakaraensis (strain KOD1))).